The primary structure comprises 321 residues: Mechanosensory protein 3 (321 aa).

LIM zinc-binding domains follow at residues 27–86 (NKCN…DHSI) and 87–152 (HRCA…QMDD). A DNA-binding region (homeobox) is located at residues 217 to 276 (RRGPRTTIKQNQLDVLNEMFSNTPKPSKHARAKLALETGLSMRVIQVWFQNRRSKERRLK).

In terms of assembly, interacts with unc-86; the heterooligomer binds to the promoters of mec-3, mec-4 and mec-7. Expressed in the mechanosensory neurons ALML, ALMR, PLML, PLMR, AVM and PVM, and the FLPL and FLPR neurons.

The protein localises to the nucleus. In terms of biological role, transcription factor. Specifies differentiation of the set of six touch receptor neurons (TRNs). May positively modulate expression of both its own gene and also of homeobox ARX homolog alr-1 in TRNs, forming a positive feedback loop with alr-1, thereby restricting the variability of expression of mec-3. Required to determine the identity of ALM sensory neurons, acting by interacting with unc-86, thereby preventing unc-86 cooperating with pag-3 to induce BDU-neuron specific genes. Binds cooperatively as a heterodimer with unc-86 to sites in the mec-3 gene promoter. Promotes outgrowth of lateral dendritic branches on the PVD nociceptive neurons, probably acting both directly, and upstream of zinc finger protein egl-46. This is Mechanosensory protein 3 (mec-3) from Caenorhabditis elegans.